The following is a 782-amino-acid chain: General transcription and DNA repair factor IIH helicase/translocase subunit XPB (782 aa).

A compositionally biased stretch (basic and acidic residues) spans 1-11 (MGRKDKSDREK). Disordered stretches follow at residues 1 to 47 (MGRK…VDES) and 211 to 242 (TISS…SGTQ). The Nuclear localization signal signature appears at 6-17 (KSDREKKSKKRY). Over residues 19–28 (EDEEEDEEVI) the composition is skewed to acidic residues. Over residues 211–223 (TISSKSAISKSQQ) the composition is skewed to low complexity. Residues 224–242 (DNGGPSSSQPADGQRSGTQ) show a composition bias toward polar residues. The 162-residue stretch at 326–487 (MFGNGRARSG…DLNFLIGPKL (162 aa)) folds into the Helicase ATP-binding domain. 339–346 (LPCGAGKS) provides a ligand contact to ATP. The short motif at 440–443 (DEVH) is the DEVH box element. The Helicase C-terminal domain maps to 541–701 (RACQFLIRFH…LAGMEEEDLM (161 aa)).

Belongs to the helicase family. RAD25/XPB subfamily. As to quaternary structure, component of the 7-subunit TFIIH core complex composed of XPB/ERCC3, XPD/ERCC2, GTF2H1, GTF2H2, GTF2H3, GTF2H4 and GTF2H5, which is active in NER. The core complex associates with the 3-subunit CDK-activating kinase (CAK) module composed of CCNH/cyclin H, CDK7 and MNAT1 to form the 10-subunit holoenzyme (holo-TFIIH) active in transcription. Interacts with PUF60. Interacts with ATF7IP. Interacts with Epstein-Barr virus EBNA2.

The protein resides in the nucleus. The enzyme catalyses Couples ATP hydrolysis with the unwinding of duplex DNA by translocating in the 3'-5' direction.. It carries out the reaction ATP + H2O = ADP + phosphate + H(+). In terms of biological role, ATP-dependent 3'-5' DNA helicase/translocase; binds dsDNA rather than ssDNA, unzipping it in a translocase rather than classical helicase activity. Component of the general transcription and DNA repair factor IIH (TFIIH) core complex. When complexed to CDK-activating kinase (CAK), involved in RNA transcription by RNA polymerase II. The ATPase activity of XPB/ERCC3, but not its helicase activity, is required for DNA opening; it may wrap around the damaged DNA wedging it open, causing localized melting and twisting that allows XPD/ERCC2 helicase to anchor. The ATP-dependent helicase activity of XPB/ERCC3 may be required for promoter escape. Also involved in transcription-coupled nucleotide excision repair (NER) of damaged DNA. In NER, TFIIH acts by opening DNA around the lesion to allow the excision of the damaged oligonucleotide and its replacement by a new DNA fragment. This Danio rerio (Zebrafish) protein is General transcription and DNA repair factor IIH helicase/translocase subunit XPB (ercc3).